The primary structure comprises 421 residues: Gamma-glutamyl phosphate reductase (421 aa).

This sequence belongs to the gamma-glutamyl phosphate reductase family.

The protein localises to the cytoplasm. It carries out the reaction L-glutamate 5-semialdehyde + phosphate + NADP(+) = L-glutamyl 5-phosphate + NADPH + H(+). The protein operates within amino-acid biosynthesis; L-proline biosynthesis; L-glutamate 5-semialdehyde from L-glutamate: step 2/2. Its function is as follows. Catalyzes the NADPH-dependent reduction of L-glutamate 5-phosphate into L-glutamate 5-semialdehyde and phosphate. The product spontaneously undergoes cyclization to form 1-pyrroline-5-carboxylate. The polypeptide is Gamma-glutamyl phosphate reductase (Acinetobacter baylyi (strain ATCC 33305 / BD413 / ADP1)).